Here is a 105-residue protein sequence, read N- to C-terminus: UPF0235 protein A1E_05380 (105 aa).

The protein belongs to the UPF0235 family.

This is UPF0235 protein A1E_05380 from Rickettsia canadensis (strain McKiel).